The sequence spans 360 residues: Farnesyl pyrophosphate synthase (360 aa).

Residues Lys-52, Arg-55, and Gln-90 each contribute to the isopentenyl diphosphate site. Asp-97 and Asp-101 together coordinate Mg(2+). Arg-106 is a binding site for dimethylallyl diphosphate. Position 107 (Arg-107) interacts with isopentenyl diphosphate. Lys-194, Thr-195, Gln-237, Lys-254, and Lys-263 together coordinate dimethylallyl diphosphate.

This sequence belongs to the FPP/GGPP synthase family. Mg(2+) is required as a cofactor.

The enzyme catalyses isopentenyl diphosphate + dimethylallyl diphosphate = (2E)-geranyl diphosphate + diphosphate. The catalysed reaction is isopentenyl diphosphate + (2E)-geranyl diphosphate = (2E,6E)-farnesyl diphosphate + diphosphate. The protein operates within isoprenoid biosynthesis; farnesyl diphosphate biosynthesis; farnesyl diphosphate from geranyl diphosphate and isopentenyl diphosphate: step 1/1. It functions in the pathway isoprenoid biosynthesis; geranyl diphosphate biosynthesis; geranyl diphosphate from dimethylallyl diphosphate and isopentenyl diphosphate: step 1/1. Farnesyl pyrophosphate synthase; part of the second module of ergosterol biosynthesis pathway that includes the middle steps of the pathway. The second module involves the formation of farnesyl diphosphate, which is also an important intermediate in the biosynthesis of ubiquinone, dolichol, heme and prenylated proteins. This module also plays a key role in the biosynthesis of triterpenes such as ganoderic acids (GA), a group of highly oxygenated lanostane-type triterpenoids which are well recognized as a main group of unique bioactive compounds in the medicinal mushroom Ganoderma lucidum. Activity by the mevalonate kinase first converts mevalonate into 5-phosphomevalonate. 5-phosphomevalonate is then further converted to 5-diphosphomevalonate by the phosphomevalonate kinase. The diphosphomevalonate decarboxylase MVD then produces isopentenyl diphosphate. The isopentenyl-diphosphate delta-isomerase then catalyzes the 1,3-allylic rearrangement of the homoallylic substrate isopentenyl (IPP) to its highly electrophilic allylic isomer, dimethylallyl diphosphate (DMAPP). Finally the farnesyl diphosphate synthase FPS catalyzes the sequential condensation of isopentenyl pyrophosphate with dimethylallyl pyrophosphate, and then with the resultant geranylpyrophosphate to the ultimate product farnesyl pyrophosphate. The chain is Farnesyl pyrophosphate synthase from Ganoderma lucidum (Ling zhi medicinal fungus).